A 199-amino-acid chain; its full sequence is Replication protein (199 aa).

The protein belongs to the Gram-positive plasmids replication protein type 2 family.

Is essential for plasmid replication. Nicks the positive strand at the plus origin of replication. In Staphylococcus aureus, this protein is Replication protein (repF).